The following is a 149-amino-acid chain: Large ribosomal subunit protein uL13 (149 aa).

Belongs to the universal ribosomal protein uL13 family. Part of the 50S ribosomal subunit.

Its function is as follows. This protein is one of the early assembly proteins of the 50S ribosomal subunit, although it is not seen to bind rRNA by itself. It is important during the early stages of 50S assembly. This is Large ribosomal subunit protein uL13 from Chlamydia pneumoniae (Chlamydophila pneumoniae).